Reading from the N-terminus, the 285-residue chain is tRNA uridine(34) hydroxylase (285 aa).

Residues 130–225 form the Rhodanese domain; it reads RGDDVVFFDG…YGEAFGDTGL (96 aa). Cys185 (cysteine persulfide intermediate) is an active-site residue.

The protein belongs to the TrhO family.

It carries out the reaction uridine(34) in tRNA + AH2 + O2 = 5-hydroxyuridine(34) in tRNA + A + H2O. Its function is as follows. Catalyzes oxygen-dependent 5-hydroxyuridine (ho5U) modification at position 34 in tRNAs. This is tRNA uridine(34) hydroxylase from Rhodococcus jostii (strain RHA1).